Here is a 375-residue protein sequence, read N- to C-terminus: Isopentenyl-diphosphate delta-isomerase (375 aa).

A substrate-binding site is contributed by 8-9; sequence RK. FMN is bound by residues Thr-65, 66 to 68, Ser-96, and Asn-125; that span reads GMT. 96 to 98 lines the substrate pocket; sequence SQR. Residue Gln-160 coordinates substrate. Position 161 (Glu-161) interacts with Mg(2+). FMN contacts are provided by residues Lys-192, Thr-222, 273 to 275, and 294 to 295; these read GVR and AL.

Belongs to the IPP isomerase type 2 family. As to quaternary structure, homooctamer. Dimer of tetramers. FMN is required as a cofactor. The cofactor is NADPH. It depends on Mg(2+) as a cofactor.

Its subcellular location is the cytoplasm. It carries out the reaction isopentenyl diphosphate = dimethylallyl diphosphate. Its function is as follows. Involved in the biosynthesis of isoprenoids. Catalyzes the 1,3-allylic rearrangement of the homoallylic substrate isopentenyl (IPP) to its allylic isomer, dimethylallyl diphosphate (DMAPP). The polypeptide is Isopentenyl-diphosphate delta-isomerase (Aeropyrum pernix (strain ATCC 700893 / DSM 11879 / JCM 9820 / NBRC 100138 / K1)).